Reading from the N-terminus, the 534-residue chain is Glucomannan 4-beta-mannosyltransferase 2 (534 aa).

Residues 36–56 (VIVPLLQLAVYICLLMSVMLL) traverse the membrane as a helical segment. D136 is a catalytic residue. Residues D195 and D197 each coordinate substrate. Residue D289 is part of the active site. Helical transmembrane passes span 368–388 (IIAHWVTFCFYCVVLPLTILV), 404–426 (IITILNSVGTPRSIHLLFYWILF), 483–503 (LNTLELGFAAFLFVCGCYDFV), and 509–529 (YFIYLFLQTMSFFISGLGWIG).

The protein belongs to the glycosyltransferase 2 family. Plant cellulose synthase-like A subfamily.

It localises to the golgi apparatus membrane. It catalyses the reaction GDP-mannose + (glucomannan)n = GDP + (glucomannan)n+1.. Functionally, possesses glucomannan synthase and mannan synthase activities in vitro. Mannan synthase consists of a 4-beta-mannosyltransferase activity on mannan using GDP-mannose. The beta-1,4-mannan product is the backbone for galactomannan synthesis by galactomannan galactosyltransferase. Galactomannan is a noncellulosic polysaccharides of plant cell wall. The chain is Glucomannan 4-beta-mannosyltransferase 2 from Arabidopsis thaliana (Mouse-ear cress).